A 390-amino-acid chain; its full sequence is Phosphopentomutase (390 aa).

Asp9, Asp283, His288, Asp324, His325, and His336 together coordinate Mn(2+).

The protein belongs to the phosphopentomutase family. Mn(2+) serves as cofactor.

It is found in the cytoplasm. The catalysed reaction is 2-deoxy-alpha-D-ribose 1-phosphate = 2-deoxy-D-ribose 5-phosphate. It carries out the reaction alpha-D-ribose 1-phosphate = D-ribose 5-phosphate. The protein operates within carbohydrate degradation; 2-deoxy-D-ribose 1-phosphate degradation; D-glyceraldehyde 3-phosphate and acetaldehyde from 2-deoxy-alpha-D-ribose 1-phosphate: step 1/2. Isomerase that catalyzes the conversion of deoxy-ribose 1-phosphate (dRib-1-P) and ribose 1-phosphate (Rib-1-P) to deoxy-ribose 5-phosphate (dRib-5-P) and ribose 5-phosphate (Rib-5-P), respectively. The chain is Phosphopentomutase from Thermotoga maritima (strain ATCC 43589 / DSM 3109 / JCM 10099 / NBRC 100826 / MSB8).